We begin with the raw amino-acid sequence, 78 residues long: UPF0270 protein IL0325 (78 aa).

This sequence belongs to the UPF0270 family.

In Idiomarina loihiensis (strain ATCC BAA-735 / DSM 15497 / L2-TR), this protein is UPF0270 protein IL0325.